We begin with the raw amino-acid sequence, 1132 residues long: Myosin-binding protein C, fast-type (1132 aa).

The tract at residues 1-59 (MPEPSKAAPKKEAKKKEEKKEEKKEAPPPQEHKDEAPDDVHPPETPDPEGLFLSKPQNV) is disordered. Residues 9-44 (PKKEAKKKEEKKEEKKEAPPPQEHKDEAPDDVHPPE) are compositionally biased toward basic and acidic residues. 5 consecutive Ig-like C2-type domains span residues 48 to 149 (PEGL…SIDV), 249 to 338 (SEAF…VKEP), 339 to 429 (PVTV…VEEK), 430 to 530 (QLEV…KQEP), and 531 to 630 (PKIH…VVDV). Fibronectin type-III domains are found at residues 633–729 (PPQS…IAPT) and 731–826 (EPTH…IREI). The 94-residue stretch at 830–923 (PKIRLPRHLR…ATLRLRVVER (94 aa)) folds into the Ig-like C2-type 6 domain. Positions 926–1022 (PPQAVRVMEV…HNTARIAKEG (97 aa)) constitute a Fibronectin type-III 3 domain. In terms of domain architecture, Ig-like C2-type 7 spans 1039–1132 (PQFLTPLVDR…ECRLDVRVPQ (94 aa)).

This sequence belongs to the immunoglobulin superfamily. MyBP family.

Its function is as follows. Thick filament-associated protein located in the crossbridge region of vertebrate striated muscle a bands. In vitro it binds MHC, F-actin and native thin filaments, and modifies the activity of actin-activated myosin ATPase. It may modulate muscle contraction or may play a more structural role. The polypeptide is Myosin-binding protein C, fast-type (MYBPC2) (Gallus gallus (Chicken)).